A 142-amino-acid chain; its full sequence is MAGLNIYVRRWRTALHATVSALIVAILGLAITPVASAATARATLSVTSTWQTGFIARFTITNSSTAPLTDWKLEFDLPAGESVLHTWNSTVARSGTHYVLSPANWNRIIAPGGSATGGLRGGLTGSYSPPSSCLLNGQYPCT.

Positions 1–37 (MAGLNIYVRRWRTALHATVSALIVAILGLAITPVASA) are cleaved as a signal peptide. The CBM2 domain occupies 38 to 142 (ATARATLSVT…CLLNGQYPCT (105 aa)).

It localises to the secreted. Its subcellular location is the cell wall. The protein resides in the cell membrane. Its function is as follows. Carbohydrate binding protein that binds chitin and cellulose. Lacks enzymatic activity and does not hydrolyze chitin and cellulose. May interact with mycobacterial biofilms, which are rich in cellulose, and play a role in biofilm formation. Could also act as an adhesin, improving the initial attachment to host cells and aiding M.bovis during the initial stages of infection. Functionally, may act as a virulence factor that modulates host immune responses and contributes to host immune evasion. The polypeptide is Cellulose/chitin binding protein BQ2027_MB2009 (Mycobacterium bovis (strain ATCC BAA-935 / AF2122/97)).